A 58-amino-acid chain; its full sequence is MLGWALTFLIIAILAGVMGFGGIAGTAAGIAKIIFFVFLVLLVLSLVANAIRGKGPKV.

The next 2 helical transmembrane spans lie at 4–24 and 27–47; these read WALT…GGIA and AAGI…LSLV.

This sequence belongs to the UPF0391 family.

It is found in the cell membrane. The chain is UPF0391 membrane protein Patl_4137 from Pseudoalteromonas atlantica (strain T6c / ATCC BAA-1087).